A 490-amino-acid chain; its full sequence is Subtilisin-like protease 8 (490 aa).

An N-terminal signal peptide occupies residues 1–26 (MKGLLSLSVLPVLAYASPMIVDSIHQ). A propeptide spanning residues 27–134 (DAAPILSSTN…YIERDSEVRA (108 aa)) is cleaved from the precursor. An Inhibitor I9 domain is found at 43 to 133 (SYIVVFKKGV…EYIERDSEVR (91 aa)). The Peptidase S8 domain occupies 144–450 (PWGLARISHR…GGSDNYKEIV (307 aa)). Catalysis depends on charge relay system residues Asp-180 and His-212. N-linked (GlcNAc...) asparagine glycosylation is present at Asn-282. Catalysis depends on Ser-378, which acts as the Charge relay system. Residue Asn-455 is glycosylated (N-linked (GlcNAc...) asparagine).

Belongs to the peptidase S8 family.

It is found in the secreted. Its function is as follows. Secreted subtilisin-like serine protease with keratinolytic activity that contributes to pathogenicity. This chain is Subtilisin-like protease 8 (SUB8), found in Arthroderma otae (strain ATCC MYA-4605 / CBS 113480) (Microsporum canis).